The primary structure comprises 722 residues: Polyribonucleotide nucleotidyltransferase (722 aa).

Residues Asp505 and Asp511 each contribute to the Mg(2+) site. In terms of domain architecture, KH spans 572–631 (PSITTIKIHPDKIRDVIGKGGATIRGICDETGASIDLDDDGNVKIYADNAAAAQAAVNRV). The S1 motif domain occupies 641 to 709 (GAIYKGRVER…NRGRVKLSMK (69 aa)).

Belongs to the polyribonucleotide nucleotidyltransferase family. As to quaternary structure, component of the RNA degradosome, which is a multiprotein complex involved in RNA processing and mRNA degradation. Mg(2+) is required as a cofactor.

It is found in the cytoplasm. It catalyses the reaction RNA(n+1) + phosphate = RNA(n) + a ribonucleoside 5'-diphosphate. In terms of biological role, involved in mRNA degradation. Catalyzes the phosphorolysis of single-stranded polyribonucleotides processively in the 3'- to 5'-direction. This is Polyribonucleotide nucleotidyltransferase from Marinobacter nauticus (strain ATCC 700491 / DSM 11845 / VT8) (Marinobacter aquaeolei).